The chain runs to 491 residues: Nicotinamide phosphoribosyltransferase (491 aa).

Position 1 is an N-acetylmethionine (M1). At Y188 the chain carries Phosphotyrosine. Position 196 (R196) interacts with diphosphate. D219 serves as a coordination point for beta-nicotinamide D-ribonucleotide. 2 residues coordinate diphosphate: H247 and R311. Beta-nicotinamide D-ribonucleotide contacts are provided by residues 311–313 (RPD), 353–354 (GD), G384, and R392. Residue S472 is modified to Phosphoserine.

It belongs to the NAPRTase family. In terms of assembly, homodimer. As to expression, ubiquitously expressed in lymphoid and non-lymphoid tissues.

It localises to the nucleus. The protein resides in the cytoplasm. Its subcellular location is the secreted. It catalyses the reaction beta-nicotinamide D-ribonucleotide + diphosphate = 5-phospho-alpha-D-ribose 1-diphosphate + nicotinamide + H(+). Its pathway is cofactor biosynthesis; NAD(+) biosynthesis; nicotinamide D-ribonucleotide from 5-phospho-alpha-D-ribose 1-diphosphate and nicotinamide: step 1/1. In terms of biological role, the secreted form behaves both as a cytokine with immunomodulating properties and an adipokine with anti-diabetic properties, it has no enzymatic activity, partly because of lack of activation by ATP, which has a low level in extracellular space and plasma. Catalyzes the condensation of nicotinamide with 5-phosphoribosyl-1-pyrophosphate to yield nicotinamide mononucleotide, an intermediate in the biosynthesis of NAD. It is the rate limiting component in the mammalian NAD biosynthesis pathway. Plays a role in the modulation of circadian clock function. NAMPT-dependent oscillatory production of NAD regulates oscillation of clock target gene expression by releasing the core clock component: CLOCK-BMAL1 heterodimer from NAD-dependent SIRT1-mediated suppression. This chain is Nicotinamide phosphoribosyltransferase (Nampt), found in Mus musculus (Mouse).